A 484-amino-acid chain; its full sequence is tRNA-2-methylthio-N(6)-dimethylallyladenosine synthase (484 aa).

Positions 29–149 (GVFHIHTLGC…LPKLLDQNRA (121 aa)) constitute an MTTase N-terminal domain. The [4Fe-4S] cluster site is built by C38, C78, C112, C186, C190, and C193. Residues 172–401 (RASRISSWVA…VALQEQITEE (230 aa)) form the Radical SAM core domain. The region spanning 404-474 (ATFEGRDVEV…RHNLLADPDV (71 aa)) is the TRAM domain.

This sequence belongs to the methylthiotransferase family. MiaB subfamily. In terms of assembly, monomer. Requires [4Fe-4S] cluster as cofactor.

The protein localises to the cytoplasm. The enzyme catalyses N(6)-dimethylallyladenosine(37) in tRNA + (sulfur carrier)-SH + AH2 + 2 S-adenosyl-L-methionine = 2-methylsulfanyl-N(6)-dimethylallyladenosine(37) in tRNA + (sulfur carrier)-H + 5'-deoxyadenosine + L-methionine + A + S-adenosyl-L-homocysteine + 2 H(+). Functionally, catalyzes the methylthiolation of N6-(dimethylallyl)adenosine (i(6)A), leading to the formation of 2-methylthio-N6-(dimethylallyl)adenosine (ms(2)i(6)A) at position 37 in tRNAs that read codons beginning with uridine. The chain is tRNA-2-methylthio-N(6)-dimethylallyladenosine synthase from Bifidobacterium longum (strain DJO10A).